Consider the following 449-residue polypeptide: Tubulin alpha chain (449 aa).

Gln-11 provides a ligand contact to GTP. The residue at position 40 (Lys-40) is an N6-acetyllysine. 7 residues coordinate GTP: Glu-71, Ser-140, Gly-144, Thr-145, Thr-179, Asn-206, and Asn-228. Mg(2+) is bound at residue Glu-71. Residue Glu-254 is part of the active site.

This sequence belongs to the tubulin family. In terms of assembly, dimer of alpha and beta chains. A typical microtubule is a hollow water-filled tube with an outer diameter of 25 nm and an inner diameter of 15 nM. Alpha-beta heterodimers associate head-to-tail to form protofilaments running lengthwise along the microtubule wall with the beta-tubulin subunit facing the microtubule plus end conferring a structural polarity. Microtubules usually have 13 protofilaments but different protofilament numbers can be found in some organisms and specialized cells. Requires Mg(2+) as cofactor. Post-translationally, undergoes a tyrosination/detyrosination cycle, the cyclic removal and re-addition of a C-terminal tyrosine residue by the enzymes tubulin tyrosine carboxypeptidase (TTCP) and tubulin tyrosine ligase (TTL), respectively. Acetylation of alpha chains at Lys-40 stabilizes microtubules and affects affinity and processivity of microtubule motors. This modification has a role in multiple cellular functions, ranging from cell motility, cell cycle progression or cell differentiation to intracellular trafficking and signaling.

Its subcellular location is the cytoplasm. The protein resides in the cytoskeleton. It catalyses the reaction GTP + H2O = GDP + phosphate + H(+). Tubulin is the major constituent of microtubules, a cylinder consisting of laterally associated linear protofilaments composed of alpha- and beta-tubulin heterodimers. Microtubules grow by the addition of GTP-tubulin dimers to the microtubule end, where a stabilizing cap forms. Below the cap, tubulin dimers are in GDP-bound state, owing to GTPase activity of alpha-tubulin. This Tetrahymena pyriformis protein is Tubulin alpha chain.